The chain runs to 150 residues: MNDILREIGMIARALDSISNIEFKDLDLTRGQYLYLVRIYENPGIIQEKLAEMIKVDRTTAARAIKKLEMQGFIQKLPDEQNKKIKKLFPTEKGKKVYPLLRREGEHSTEVALSGFTSEEKETISALLHRVRKNIERDWEYVKKGNKRDY.

The region spanning 1 to 133 is the HTH marR-type domain; that stretch reads MNDILREIGM…ISALLHRVRK (133 aa). A DNA-binding region (H-T-H motif) is located at residues 47–70; the sequence is QEKLAEMIKVDRTTAARAIKKLEM.

This is an uncharacterized protein from Bacillus subtilis (strain 168).